A 460-amino-acid chain; its full sequence is Glucan endo-1,3-beta-D-glucosidase (460 aa).

Positions 1 to 26 (MAANVQTSSLLFLVFLLLQNFYSANS) are cleaved as a signal peptide. Glutamate 123 functions as the Proton donor in the catalytic mechanism. Glutamate 268 (nucleophile) is an active-site residue. The disordered stretch occupies residues 352–371 (NTQNPTTPATPTPTPKAAGS). The N-linked (GlcNAc...) asparagine glycan is linked to asparagine 355. Cysteine 373 and cysteine 435 are disulfide-bonded. Residue asparagine 447 is glycosylated (N-linked (GlcNAc...) asparagine).

The protein belongs to the glycosyl hydrolase 17 family. Homodimer. In terms of processing, glycosylated. Contains two additional disulfide bonds, but it is unclear if they are between the pairs Cys-392-Cys-398 and Cys-407-Cys-453 (PudMed:18096638) or between the pairs Cys-392-Cys-453 and Cys-398-Cys-407 (PudMed:12392450). As to expression, expressed only in pollen.

Its subcellular location is the secreted. The enzyme catalyses Hydrolysis of (1-&gt;3)-beta-D-glucosidic linkages in (1-&gt;3)-beta-D-glucans.. The polypeptide is Glucan endo-1,3-beta-D-glucosidase (OLE9) (Olea europaea (Common olive)).